A 1033-amino-acid polypeptide reads, in one-letter code: Isoleucine--tRNA ligase 2 (1033 aa).

The 'HIGH' region signature appears at 47–57 (PTANGLPHVGH). Positions 590–594 (KMSKS) match the 'KMSKS' region motif. Lys593 is a binding site for ATP.

The protein belongs to the class-I aminoacyl-tRNA synthetase family. IleS type 2 subfamily. In terms of assembly, monomer. Requires Zn(2+) as cofactor.

It is found in the cytoplasm. It catalyses the reaction tRNA(Ile) + L-isoleucine + ATP = L-isoleucyl-tRNA(Ile) + AMP + diphosphate. Functionally, catalyzes the attachment of isoleucine to tRNA(Ile). As IleRS can inadvertently accommodate and process structurally similar amino acids such as valine, to avoid such errors it has two additional distinct tRNA(Ile)-dependent editing activities. One activity is designated as 'pretransfer' editing and involves the hydrolysis of activated Val-AMP. The other activity is designated 'posttransfer' editing and involves deacylation of mischarged Val-tRNA(Ile). This chain is Isoleucine--tRNA ligase 2, found in Bacillus anthracis.